The following is a 726-amino-acid chain: Type VI secretion system spike protein VgrG1c (726 aa).

The disordered stretch occupies residues 502 to 522 (ANATQSGTKSRSSKGGTPANF). Positions 507–518 (SGTKSRSSKGGT) are enriched in low complexity.

It belongs to the VgrG protein family. In terms of assembly, forms homomultimers. Part of the type VI secretion system (T6SS).

The protein resides in the secreted. Its function is as follows. Part of the H1 type VI secretion system (H1-T6SS) specialized secretion system, which delivers several virulence factors in both prokaryotic and eukaryotic cells during infection. Allows the delivery of the Tse5/RhsP1 toxin to target cells where it exerts its toxicity. This chain is Type VI secretion system spike protein VgrG1c, found in Pseudomonas aeruginosa (strain ATCC 15692 / DSM 22644 / CIP 104116 / JCM 14847 / LMG 12228 / 1C / PRS 101 / PAO1).